Consider the following 242-residue polypeptide: MQVIVLPLVFLATFATSGSLAAPDASPEIVPVDGGLSGYGTTTRYWDCCKPSCAWKENINTPTMTPVQTCAIDGNTVVNASVQSGCIGGSSYMCSNQQAFVVNSTLAFGFAAGSFTGGVDNNLCCSCMLLTFQGQLAGKQFLVQITNTGGDLGSTSSIWPFPGGGVGIFTQGCHDQWTPRGAAGGDQYGGVYSVEQCSDLPEVLQPGCRFRFEFLENVSNPQVSFQQVQCPAEIVAISNCAL.

The first 21 residues, methionine 1–alanine 21, serve as a signal peptide directing secretion. Catalysis depends on aspartate 47, which acts as the Nucleophile. N-linked (GlcNAc...) asparagine glycosylation is found at asparagine 79, asparagine 103, and asparagine 217.

Belongs to the glycosyl hydrolase 45 (cellulase K) family. Expressed in larval carcasses and gut, and adult gut.

It is found in the secreted. The catalysed reaction is Endohydrolysis of (1-&gt;4)-beta-D-glucosidic linkages in cellulose, lichenin and cereal beta-D-glucans.. The protein is Endoglucanase of Phaedon cochleariae (Mustard beetle).